We begin with the raw amino-acid sequence, 378 residues long: MQFFSLKTRIVLGEGSLSYIKSVAKKHSRVLIFSSKSMRVHGFLNETMNYVEDANAEVEAITGVPAEPSYEYVESIMPKVREFQPDLIVALGGGSVIDVAKAVKVFYDAPELKFEEVAFISRFEKPKPIPKLKTPLIAIPSTSGAGSEVSAASVLKKGDIKYNLVSFEIAPEFAILDPRLPRTMPKEVARNSGLDVLVHGIEAYTTTAATPFSDAMAIKAIKLVYKWLPLSVQGDEKARENVHYAATMAGIAFLNARLGLCHSLSHKAAWIAPHGLLNAIFLPYVMEFNMRSEYARKRYAEIARELGFNTAQELIEVIREFNEMLGVPKLSELVSEEEFLSKLDEMSEKAYHDPLINFNPVEPSIEEIKELYKRAFYD.

The Fe cation site is built by Asp195, His199, His262, and His274.

This sequence belongs to the iron-containing alcohol dehydrogenase family. Fe(2+) is required as a cofactor. The cofactor is Mn(2+).

The enzyme catalyses a primary alcohol + NAD(+) = an aldehyde + NADH + H(+). The catalysed reaction is butan-1-ol + NAD(+) = butanal + NADH + H(+). It catalyses the reaction hexan-1-ol + NAD(+) = hexanal + NADH + H(+). It carries out the reaction ethanol + NAD(+) = acetaldehyde + NADH + H(+). Thermostable type III alcohol dehydrogenase. For oxidation activity, the best substrates are 1-butanol and 1-hexanol, followed by ethanol. Shows lower activity with ethylene glycol, isopentanol, isopropanol and glycerol. Displays higher reduction activity in the presence of butanal, followed by acetaldehyde. Has lower activity with hexanal and acetone. The polypeptide is Alcohol dehydrogenase (Thermococcus barophilus).